Reading from the N-terminus, the 138-residue chain is Thyrotropin subunit beta (138 aa).

The signal sequence occupies residues 1 to 20 (MNAVVLFSVLFALACGQVSS). 6 disulfides stabilise this stretch: cysteine 22-cysteine 72, cysteine 36-cysteine 87, cysteine 39-cysteine 125, cysteine 47-cysteine 103, cysteine 51-cysteine 105, and cysteine 108-cysteine 115. N-linked (GlcNAc...) asparagine glycosylation is present at asparagine 43. The propeptide occupies 133 to 138 (LGGFSG).

This sequence belongs to the glycoprotein hormones subunit beta family. As to quaternary structure, heterodimer of a common alpha chain and a unique beta chain which confers biological specificity to thyrotropin, lutropin, follitropin and gonadotropin.

The protein localises to the secreted. In terms of biological role, indispensable for the control of thyroid structure and metabolism. This is Thyrotropin subunit beta (Tshb) from Rattus norvegicus (Rat).